The sequence spans 230 residues: MSEIKDVIVQGLWKNNSALVQLLGMCPLLAVTSTATNALGLGLATTLVLTLTNLTISTLRRWTPTEIRIPIYVMIIASVVSAVQMLINAYAFGLYQSLGIFIPLIVTNCIVVGRAEAFAAKKGPALSALDGFAIGMGATGAMFVLGAMREIIGNGTLFDGADALLGNWAKVLRVEIFHTDSPFLLAMLPPGAFIGLGLMLAGKYLIDEKMKKRRAKTVVNEIPAGETGKV.

Transmembrane regions (helical) follow at residues 18-38, 39-59, 63-83, 86-106, 128-148, and 182-202; these read ALVQ…ATNA, LGLG…ISTL, TPTE…VSAV, LINA…PLIV, ALDG…LGAM, and PFLL…MLAG.

It belongs to the NqrDE/RnfAE family. The complex is composed of six subunits: RsxA, RsxB, RsxC, RsxD, RsxE and RsxG.

It is found in the cell inner membrane. Part of a membrane-bound complex that couples electron transfer with translocation of ions across the membrane. Required to maintain the reduced state of SoxR. The polypeptide is Ion-translocating oxidoreductase complex subunit E (Escherichia fergusonii (strain ATCC 35469 / DSM 13698 / CCUG 18766 / IAM 14443 / JCM 21226 / LMG 7866 / NBRC 102419 / NCTC 12128 / CDC 0568-73)).